A 146-amino-acid chain; its full sequence is Hemoglobin subunit beta (146 aa).

Valine 1 is subject to N-acetylvaline. Positions 2 to 146 (HLTGEEKAAV…VATALAHKYH (145 aa)) constitute a Globin domain. Threonine 12 carries the post-translational modification Phosphothreonine. At serine 44 the chain carries Phosphoserine. Position 59 is an N6-acetyllysine (lysine 59). Histidine 63 serves as a coordination point for heme b. Residue lysine 82 is modified to N6-acetyllysine. Residue histidine 92 participates in heme b binding. Cysteine 93 is subject to S-nitrosocysteine. Lysine 144 is modified (N6-acetyllysine).

It belongs to the globin family. Heterotetramer of two alpha chains and two beta chains. As to expression, red blood cells.

In terms of biological role, involved in oxygen transport from the lung to the various peripheral tissues. The polypeptide is Hemoglobin subunit beta (HBB) (Macroderma gigas (Australian ghost bat)).